The following is a 616-amino-acid chain: Electron transfer flavoprotein-ubiquinone oxidoreductase, mitochondrial (616 aa).

A mitochondrion-targeting transit peptide spans 1-32; the sequence is MLVRLTKLSCPAYHWFHALKIKKCLPLCAPRC. FAD is bound at residue 70–84; sequence VVIVGAGPAGLSAAI. Lys-95 is modified (N6-acetyllysine). An intramembrane segment occupies 108 to 129; it reads IGAHTLSGACLDPAAFKELFPD. An N6-acetyllysine mark is found at Lys-131 and Lys-222. A ubiquinone-binding residues include Gly-304 and Gly-305. N6-acetyllysine is present on residues Lys-356 and Lys-415. Residues 427 to 446 lie within the membrane without spanning it; the sequence is TGLHVTEYEDNLKQSWVWKE. Position 550 is a phosphoserine (Ser-550). Cys-560, Cys-585, Cys-588, and Cys-591 together coordinate [4Fe-4S] cluster. The 30-residue stretch at 576 to 605 folds into the 4Fe-4S ferredoxin-type domain; that stretch reads FRLQINAQNCVHCKTCDIKDPSQNINWVVP.

This sequence belongs to the ETF-QO/FixC family. Monomer. [4Fe-4S] cluster is required as a cofactor. Requires FAD as cofactor. Post-translationally, acetylation of Lys-95 and Lys-222 is observed in liver mitochondria from fasted mice but not from fed mice.

It is found in the mitochondrion inner membrane. The catalysed reaction is a ubiquinone + reduced [electron-transfer flavoprotein] = a ubiquinol + oxidized [electron-transfer flavoprotein] + H(+). Accepts electrons from ETF and reduces ubiquinone. In Mus musculus (Mouse), this protein is Electron transfer flavoprotein-ubiquinone oxidoreductase, mitochondrial (Etfdh).